The sequence spans 585 residues: Eukaryotic translation initiation factor 3 subunit D (585 aa).

Residues 43–60 show a composition bias toward basic and acidic residues; sequence LGRMADWTGDGKDRDRGG. 2 disordered regions span residues 43–62 and 109–152; these read LGRMADWTGDGKDRDRGGRQ and RGGG…NRSA. Residues 109–130 show a composition bias toward gly residues; that stretch reads RGGGTVFRGRGQRGVGQRGGRA. The RNA gate stretch occupies residues 300–314; that stretch reads SIDLVTVNENAADAP. The tract at residues 560–585 is disordered; that stretch reads VPPNTFEEDDEAAEEQEEKAEEESEE. Positions 565 to 585 are enriched in acidic residues; sequence FEEDDEAAEEQEEKAEEESEE.

The protein belongs to the eIF-3 subunit D family. In terms of assembly, component of the eukaryotic translation initiation factor 3 (eIF-3) complex.

It localises to the cytoplasm. Its function is as follows. mRNA cap-binding component of the eukaryotic translation initiation factor 3 (eIF-3) complex, which is involved in protein synthesis of a specialized repertoire of mRNAs and, together with other initiation factors, stimulates binding of mRNA and methionyl-tRNAi to the 40S ribosome. The eIF-3 complex specifically targets and initiates translation of a subset of mRNAs involved in cell proliferation. In the eIF-3 complex, eif3d specifically recognizes and binds the 7-methylguanosine cap of a subset of mRNAs. The polypeptide is Eukaryotic translation initiation factor 3 subunit D (Neosartorya fischeri (strain ATCC 1020 / DSM 3700 / CBS 544.65 / FGSC A1164 / JCM 1740 / NRRL 181 / WB 181) (Aspergillus fischerianus)).